A 206-amino-acid polypeptide reads, in one-letter code: Large ribosomal subunit protein uL4 (206 aa).

Residues 47 to 77 (GTQSTKTRSEVRGGGIKPWRQKGTGRARQGS) form a disordered region.

The protein belongs to the universal ribosomal protein uL4 family. As to quaternary structure, part of the 50S ribosomal subunit.

Its function is as follows. One of the primary rRNA binding proteins, this protein initially binds near the 5'-end of the 23S rRNA. It is important during the early stages of 50S assembly. It makes multiple contacts with different domains of the 23S rRNA in the assembled 50S subunit and ribosome. Forms part of the polypeptide exit tunnel. This chain is Large ribosomal subunit protein uL4, found in Clostridium beijerinckii (strain ATCC 51743 / NCIMB 8052) (Clostridium acetobutylicum).